The sequence spans 300 residues: MSNTRVHNPSASILSDFKEITKMRLAISVVFSSVAGYFLGADTIDFVTVTLLAIGGYLMVGASNAYNQIIERNLDALMDRTKNRPLPAGRMSVPVAFTIASAFTVLGLVVLYVINPKTAMFGAISIFLYVSIYTPLKTKTPLSVFVGAFPGAIPFMLGWVAASGSFSIEPGTLFMIQFFWQFPHFWAIGWWLFDDYKKGGFFMLPTGKRDRGTAIQIILYTCWTILVSLIPVFGVTGKLMLTPVSGIIIFLLGLGMLYYAIRLFKEKTAEAAKKLMFASVSYITLLQIVYVLDKFIREWI.

9 consecutive transmembrane segments (helical) span residues 20–40, 43–63, 94–114, 116–136, 142–162, 173–193, 215–235, 241–261, and 276–296; these read ITKM…YFLG, TIDF…VGAS, PVAF…LYVI, PKTA…YTPL, LSVF…WVAA, LFMI…WWLF, IQII…VFGV, LTPV…YYAI, and MFAS…DKFI.

Belongs to the UbiA prenyltransferase family. Protoheme IX farnesyltransferase subfamily.

It is found in the cell membrane. It catalyses the reaction heme b + (2E,6E)-farnesyl diphosphate + H2O = Fe(II)-heme o + diphosphate. Its pathway is porphyrin-containing compound metabolism; heme O biosynthesis; heme O from protoheme: step 1/1. In terms of biological role, converts heme B (protoheme IX) to heme O by substitution of the vinyl group on carbon 2 of heme B porphyrin ring with a hydroxyethyl farnesyl side group. This chain is Protoheme IX farnesyltransferase, found in Christiangramia forsetii (strain DSM 17595 / CGMCC 1.15422 / KT0803) (Gramella forsetii).